The following is a 309-amino-acid chain: Ribosomal RNA small subunit methyltransferase H (309 aa).

Residues 33–35 (GGH), Asp-53, Phe-79, Asp-100, and Gln-107 contribute to the S-adenosyl-L-methionine site.

Belongs to the methyltransferase superfamily. RsmH family.

It localises to the cytoplasm. The catalysed reaction is cytidine(1402) in 16S rRNA + S-adenosyl-L-methionine = N(4)-methylcytidine(1402) in 16S rRNA + S-adenosyl-L-homocysteine + H(+). Specifically methylates the N4 position of cytidine in position 1402 (C1402) of 16S rRNA. The polypeptide is Ribosomal RNA small subunit methyltransferase H (Clostridium kluyveri (strain NBRC 12016)).